We begin with the raw amino-acid sequence, 172 residues long: MNPFRWSFRAQFLLGFLACAGLLAYAIYVQLHLGLEPCPLCIFQRIAFAALAMFFLLGALHGPRAAAGRKVYGVLSFIAAGVGMGIAARHVWVQIRPKDMMSSCGPPLSFLSETMGPFEVFRTVLTGTGDCGNIDWRFLGLSMPMWSMVWFVGLALWALYAGFKARRSSVHH.

Over M1–Q11 the chain is Cytoplasmic. The chain crosses the membrane as a helical span at residues F12–Y28. Residues V29–I46 are Periplasmic-facing. An intrachain disulfide couples C38 to C41. A helical membrane pass occupies residues A47–P63. Over R64–K70 the chain is Cytoplasmic. The helical transmembrane segment at V71–A88 threads the bilayer. Residues R89–M145 lie on the Periplasmic side of the membrane. C104 and C131 form a disulfide bridge. A helical membrane pass occupies residues W146 to K164. Residues A165–H172 lie on the Cytoplasmic side of the membrane.

This sequence belongs to the DsbB family.

The protein localises to the cell inner membrane. Functionally, required for disulfide bond formation in some periplasmic proteins. Acts by oxidizing the DsbA protein. The protein is Disulfide bond formation protein B of Xanthomonas euvesicatoria pv. vesicatoria (strain 85-10) (Xanthomonas campestris pv. vesicatoria).